A 295-amino-acid chain; its full sequence is MATFNPQNEMENQARVQEYKVSTGRGGAGNIHKSMSKPSPVLLPLKSNSKTVANNNNNGSNQEKVPRFAIGRGGAGNIFHDPHLTRSAQQLDSNDNINYNDVINDIDDYISPITSDMVDEGGSNPVTNTRSRISATRSHQSLHATTSSPNNNAPIVVGRGGAGNIFFNKKKVASNGGNEEDEIRGGNIEDEDTINANEDNLFVVTSNGNALAAIKSTSKKPKNKLKGKSAPEKFAIGRGGAGNIISPKSSRNTINHNLNDDDEDKFNLKDDNGKEKKKKKKKKSGFFSSLKTMFN.

An N-acetylalanine modification is found at alanine 2. Phosphoserine occurs at positions 36, 39, 47, 123, 138, 141, and 147. Residues serine 134–alanine 153 are compositionally biased toward polar residues. Disordered stretches follow at residues serine 134–valine 156 and threonine 217–asparagine 295. Positions threonine 217–glycine 227 are enriched in basic residues. Serine 246 is subject to Phosphoserine. The span at serine 246–histidine 256 shows a compositional bias: polar residues. A compositionally biased stretch (basic and acidic residues) spans lysine 265 to lysine 274. Residues glutamate 275–serine 284 show a composition bias toward basic residues. Residues glycine 285–asparagine 295 show a composition bias toward low complexity.

In terms of processing, hyperphosphorylated after treatment with rapamycin in a TAP42-dependent manner.

The protein resides in the cytoplasm. Its function is as follows. Involved in resistance to cisplatin. In Saccharomyces cerevisiae (strain ATCC 204508 / S288c) (Baker's yeast), this protein is Protein PAR32 (PAR32).